Here is a 943-residue protein sequence, read N- to C-terminus: Isoleucine--tRNA ligase (943 aa).

The 'HIGH' region motif lies at 58 to 68 (PYANGSIHIGH). Residue glutamate 567 coordinates L-isoleucyl-5'-AMP. The 'KMSKS' region motif lies at 608–612 (KMSKS). Lysine 611 provides a ligand contact to ATP. Cysteine 906, cysteine 909, cysteine 926, and cysteine 929 together coordinate Zn(2+).

It belongs to the class-I aminoacyl-tRNA synthetase family. IleS type 1 subfamily. In terms of assembly, monomer. Zn(2+) is required as a cofactor.

The protein localises to the cytoplasm. It catalyses the reaction tRNA(Ile) + L-isoleucine + ATP = L-isoleucyl-tRNA(Ile) + AMP + diphosphate. Its function is as follows. Catalyzes the attachment of isoleucine to tRNA(Ile). As IleRS can inadvertently accommodate and process structurally similar amino acids such as valine, to avoid such errors it has two additional distinct tRNA(Ile)-dependent editing activities. One activity is designated as 'pretransfer' editing and involves the hydrolysis of activated Val-AMP. The other activity is designated 'posttransfer' editing and involves deacylation of mischarged Val-tRNA(Ile). This Pseudomonas fluorescens (strain ATCC BAA-477 / NRRL B-23932 / Pf-5) protein is Isoleucine--tRNA ligase.